The primary structure comprises 493 residues: Phospholipid transfer protein (493 aa).

Positions 1-17 are cleaved as a signal peptide; sequence MALFGALFLALLAGAHA. The N-linked (GlcNAc...) (complex) asparagine glycan is linked to asparagine 64. N-linked (GlcNAc...) asparagine glycosylation is present at asparagine 94. The N-linked (GlcNAc...) (complex) asparagine glycan is linked to asparagine 117. Asparagine 143 carries N-linked (GlcNAc...) asparagine glycosylation. Cysteine 146 and cysteine 185 are oxidised to a cystine. Asparagine 245 is a glycosylation site (N-linked (GlcNAc...) (complex) asparagine). Asparagine 398 is a glycosylation site (N-linked (GlcNAc...) asparagine).

Belongs to the BPI/LBP/Plunc superfamily. BPI/LBP family. Glycosylation is necessary for secretion and its phospholipid transfer activity. As to expression, widely expressed. Highest level of expression in the ovary, thymus and placenta, with moderate levels found in the pancreas, small intestine, testis, lung and prostrate. Low level expression in the kidney, liver and spleen, with very low levels found in the heart, colon, skeletal muscle, leukocytes and brain. Expressed in the cortical neurons.

Its subcellular location is the secreted. It is found in the nucleus. The enzyme catalyses a 1,2-diacyl-sn-glycero-3-phosphocholine(in) = a 1,2-diacyl-sn-glycero-3-phosphocholine(out). It carries out the reaction a 1,2-diacyl-sn-glycero-3-phosphoethanolamine(in) = a 1,2-diacyl-sn-glycero-3-phosphoethanolamine(out). The catalysed reaction is a 1,2-diacyl-sn-glycerol(in) = a 1,2-diacyl-sn-glycerol(out). It catalyses the reaction a 1,2-diacyl-sn-glycero-3-phosphate(in) = a 1,2-diacyl-sn-glycero-3-phosphate(out). The enzyme catalyses a sphingomyelin(in) = a sphingomyelin(out). It carries out the reaction a 1,2-diacyl-sn-glycero-3-phospho-(1'-sn-glycerol)(in) = a 1,2-diacyl-sn-glycero-3-phospho-(1'-sn-glycerol)(out). The catalysed reaction is a 1,2-diacyl-sn-glycero-3-phospho-(1D-myo-inositol)(in) = a 1,2-diacyl-sn-glycero-3-phospho-(1D-myo-inositol)(out). It catalyses the reaction 1-hexadecanoyl-2-(5Z,8Z,11Z,14Z-eicosatetraenoyl)-sn-glycero-3-phosphoethanolamine(in) = 1-hexadecanoyl-2-(5Z,8Z,11Z,14Z-eicosatetraenoyl)-sn-glycero-3-phosphoethanolamine(out). The enzyme catalyses N-(hexadecanoyl)-sphing-4-enine-1-phosphocholine(in) = N-(hexadecanoyl)-sphing-4-enine-1-phosphocholine(out). It carries out the reaction 1,2-dihexadecanoyl-sn-glycero-3-phosphocholine(in) = 1,2-dihexadecanoyl-sn-glycero-3-phosphocholine(out). Mediates the transfer of phospholipids and free cholesterol from triglyceride-rich lipoproteins (low density lipoproteins or LDL and very low density lipoproteins or VLDL) into high-density lipoproteins (HDL) as well as the exchange of phospholipids between triglyceride-rich lipoproteins themselves. Facilitates the transfer of a spectrum of different lipid molecules, including diacylglycerol, phosphatidic acid, sphingomyelin, phosphatidylcholine, phosphatidylinositol, phosphatidylglycerol, cerebroside and phosphatidyl ethanolamine. Plays an important role in HDL remodeling which involves modulating the size and composition of HDL. Also plays a key role in the uptake of cholesterol from peripheral cells and tissues that is subsequently transported to the liver for degradation and excretion. Two distinct forms of PLTP exist in plasma: an active form that can transfer phosphatidylcholine from phospholipid vesicles to HDL, and an inactive form that lacks this capability. This Homo sapiens (Human) protein is Phospholipid transfer protein (PLTP).